Consider the following 446-residue polypeptide: RUN domain-containing protein 3A (446 aa).

Positions 1–298 are interaction with RAP2A; that stretch reads MEASFVQTTM…LQLQLEEAAA (298 aa). Residues 52–189 enclose the RUN domain; it reads DDSSEEFVNF…IDFSFCLKGE (138 aa). Thr-215 carries the phosphothreonine modification. The segment at 216-239 is disordered; that stretch reads DEEERHSAESSTSEDNSPEHPYLP. The residue at position 232 (Ser-232) is a Phosphoserine. A coiled-coil region spans residues 267–322; the sequence is YLEELVRLRESQLKDLEAENRRLQLQLEEAAAQNQREKRELEGVILELQEQLTGLI. Positions 372–384 are enriched in polar residues; sequence PLSAEASLSSDSQ. The tract at residues 372–404 is disordered; sequence PLSAEASLSSDSQRLGEGTRDEEPWGPIGKDPT. 2 positions are modified to phosphoserine: Ser-416 and Ser-419.

The protein belongs to the RUNDC3 family. As to quaternary structure, interacts with the GTP-bound form of RAP2A.

Its function is as follows. May act as an effector of RAP2A in neuronal cells. This is RUN domain-containing protein 3A (RUNDC3A) from Homo sapiens (Human).